The following is a 360-amino-acid chain: Phosphoserine aminotransferase (360 aa).

Arg-42 lines the L-glutamate pocket. Positions 102, 152, 171, and 194 each coordinate pyridoxal 5'-phosphate. Lys-195 carries the N6-(pyridoxal phosphate)lysine modification. 237 to 238 (NT) serves as a coordination point for pyridoxal 5'-phosphate.

This sequence belongs to the class-V pyridoxal-phosphate-dependent aminotransferase family. SerC subfamily. Homodimer. Requires pyridoxal 5'-phosphate as cofactor.

It is found in the cytoplasm. The catalysed reaction is O-phospho-L-serine + 2-oxoglutarate = 3-phosphooxypyruvate + L-glutamate. It carries out the reaction 4-(phosphooxy)-L-threonine + 2-oxoglutarate = (R)-3-hydroxy-2-oxo-4-phosphooxybutanoate + L-glutamate. It functions in the pathway amino-acid biosynthesis; L-serine biosynthesis; L-serine from 3-phospho-D-glycerate: step 2/3. The protein operates within cofactor biosynthesis; pyridoxine 5'-phosphate biosynthesis; pyridoxine 5'-phosphate from D-erythrose 4-phosphate: step 3/5. Its function is as follows. Catalyzes the reversible conversion of 3-phosphohydroxypyruvate to phosphoserine and of 3-hydroxy-2-oxo-4-phosphonooxybutanoate to phosphohydroxythreonine. This chain is Phosphoserine aminotransferase, found in Coxiella burnetii (strain CbuK_Q154) (Coxiella burnetii (strain Q154)).